The sequence spans 330 residues: Nodulation protein D 2 (330 aa).

The region spanning 6 to 63 (LDLNLLVALDALITERNLSSAARKINLSQPAMSAAVARLRKHFRDELFGMRGRELVLS) is the HTH lysR-type domain. A DNA-binding region (H-T-H motif) is located at residues 23-42 (LSSAARKINLSQPAMSAAVA). A disordered region spans residues 308–330 (RVTSSPEDAEPPGHFVRSVSPLP).

It belongs to the LysR transcriptional regulatory family.

Its function is as follows. NodD regulates the expression of the nodABCFE genes which encode other nodulation proteins. NodD is also a negative regulator of its own expression. Binds flavonoids as inducers. This Bradyrhizobium diazoefficiens (strain JCM 10833 / BCRC 13528 / IAM 13628 / NBRC 14792 / USDA 110) protein is Nodulation protein D 2 (nodD2).